The chain runs to 464 residues: Aspartyl protease AED1 (464 aa).

Positions 1 to 25 (MSIMRNFLSMIIMLCVCLNWCFAEG) are cleaved as a signal peptide. Residues 132–460 (YIVTIGIGTP…DVAGGRVGFA (329 aa)) form the Peptidase A1 domain. Active-site residues include Asp150 and Asp345. Cysteines 384 and 425 form a disulfide.

Belongs to the peptidase A1 family.

It localises to the secreted. The protein localises to the extracellular space. Its subcellular location is the apoplast. Its function is as follows. Aspartyl protease involved in a homeostatic feedback mechanism regulating systemic immunity. Has only mild or no influence on local defenses. Acts downstream of salicylic acid to suppress systemic immunity. This is Aspartyl protease AED1 from Arabidopsis thaliana (Mouse-ear cress).